A 346-amino-acid chain; its full sequence is G-protein coupled receptor 42 (346 aa).

Residues 1–19 are Extracellular-facing; the sequence is MDTGPDQSYFSGNHWFVFS. Residues 20–40 traverse the membrane as a helical segment; the sequence is VYLLTFLVGLPLNLLALVVFV. Topologically, residues 41–47 are cytoplasmic; that stretch reads GKLRCRP. A helical transmembrane segment spans residues 48 to 68; the sequence is VAVDVLLLNLTASDLLLLLFL. Over 69–90 the chain is Extracellular; that stretch reads PFRMVEAANGMHWPLPFILCPL. A helical transmembrane segment spans residues 91 to 111; the sequence is SGFIFFTTIYLTALFLAAVSI. The Cytoplasmic segment spans residues 112-132; sequence ERFLSVAHPLWYKTRPRLGQA. The chain crosses the membrane as a helical span at residues 133 to 153; the sequence is GLVSVACWLLASAHCSVVYVI. Over 154 to 178 the chain is Extracellular; sequence EFSGDISHSQGTNGTCYLEFRKDQL. Asparagine 166 is a glycosylation site (N-linked (GlcNAc...) asparagine). A helical transmembrane segment spans residues 179 to 199; the sequence is AILLPVRLEMAVVLFVVPLII. Residues 200 to 222 lie on the Cytoplasmic side of the membrane; it reads TSYCYSRLVWILGRGGSHRRQRR. The chain crosses the membrane as a helical span at residues 223 to 243; it reads VAGLVAATLLNFLVCFGPYNV. Topologically, residues 244 to 258 are extracellular; that stretch reads SHVVGYICGESPVWR. The helical transmembrane segment at 259–279 threads the bilayer; it reads IYVTLLSTLNSCVDPFVYYFS. Residues 280-346 lie on the Cytoplasmic side of the membrane; it reads SSGFQADFHE…TGGQVACAEN (67 aa). The span at 307–330 shows a compositional bias: basic and acidic residues; that stretch reads MELKEQKGGEEQRADRPAERKTSE. The interval 307–346 is disordered; that stretch reads MELKEQKGGEEQRADRPAERKTSEHSQGCGTGGQVACAEN.

The protein belongs to the G-protein coupled receptor 1 family.

It is found in the cell membrane. G protein-coupled receptor that is activated by short chain fatty acids (SCFAs), such as propionate. Hence may play a role in the regulation of whole-body energy homeostasis and/or in intestinal immunity. This is G-protein coupled receptor 42 (GPR42) from Homo sapiens (Human).